A 454-amino-acid chain; its full sequence is Chromosomal replication initiator protein DnaA (454 aa).

The segment at 1–77 (MASLNENQKF…GFEVFGRMID (77 aa)) is domain I, interacts with DnaA modulators. Residues 77-115 (DYELYANDELTDIELRRLNNQSPVDEPLSVAKPTSPLVS) are domain II. The tract at residues 116-332 (GLNEKYNFEN…GALNRVEFVA (217 aa)) is domain III, AAA+ region. ATP contacts are provided by glycine 160, glycine 162, lysine 163, and threonine 164. A domain IV, binds dsDNA region spans residues 333–454 (RANGISIVDI…KDIDSIKRKF (122 aa)).

Belongs to the DnaA family. As to quaternary structure, oligomerizes as a right-handed, spiral filament on DNA at oriC.

It localises to the cytoplasm. Its function is as follows. Plays an essential role in the initiation and regulation of chromosomal replication. ATP-DnaA binds to the origin of replication (oriC) to initiate formation of the DNA replication initiation complex once per cell cycle. Binds the DnaA box (a 9 base pair repeat at the origin) and separates the double-stranded (ds)DNA. Forms a right-handed helical filament on oriC DNA; dsDNA binds to the exterior of the filament while single-stranded (ss)DNA is stabiized in the filament's interior. The ATP-DnaA-oriC complex binds and stabilizes one strand of the AT-rich DNA unwinding element (DUE), permitting loading of DNA polymerase. After initiation quickly degrades to an ADP-DnaA complex that is not apt for DNA replication. Binds acidic phospholipids. The chain is Chromosomal replication initiator protein DnaA from Lactococcus lactis subsp. cremoris (strain MG1363).